A 107-amino-acid chain; its full sequence is Cytochrome c2 (107 aa).

Pyrrolidone carboxylic acid is present on Q1. Residues C13, C16, H17, and M79 each coordinate heme c.

Belongs to the cytochrome c family. Post-translationally, binds 1 heme c group covalently per subunit.

It localises to the periplasm. Cytochrome c2 is found mainly in purple, non-sulfur, photosynthetic bacteria where it functions as the electron donor to the oxidized bacteriochlorophyll in the photophosphorylation pathway. However, it may also have a role in the respiratory chain and is found in some non-photosynthetic bacteria. The chain is Cytochrome c2 from Rhodoplanes tepidamans (Rhodoplanes cryptolactis).